A 949-amino-acid polypeptide reads, in one-letter code: ATPase 6, plasma membrane-type (949 aa).

The Cytoplasmic portion of the chain corresponds to 1-64 (MAADISWDEI…EKVENKFLKF (64 aa)). Residues 65–84 (LGFMWNPLSWVMEAAAIMAI) form a helical membrane-spanning segment. The Extracellular segment spans residues 85-96 (VLANGGGRPPDW). The helical transmembrane segment at 97–117 (QDFVGITCLLIINSTISFIEE) threads the bilayer. The Cytoplasmic segment spans residues 118–246 (NNAGNAAAAL…GHFQKVLTAI (129 aa)). Residues 247 to 267 (GNFCICSIGIGMLIEIIIMYP) form a helical membrane-spanning segment. The Extracellular portion of the chain corresponds to 268-276 (IQHRKYRDG). The chain crosses the membrane as a helical span at residues 277–294 (IDNLLVLLIGGIPIAMPT). Topologically, residues 295-645 (VLSVTMAIGS…TSRAIFQRMK (351 aa)) are cytoplasmic. The 4-aspartylphosphate intermediate role is filled by aspartate 332. 2 residues coordinate Mg(2+): aspartate 590 and aspartate 594. Residues 646 to 667 (NYTIYAVSITIRIVLGFMLVAL) form a helical membrane-spanning segment. The Extracellular portion of the chain corresponds to 668-672 (IWEFD). A helical transmembrane segment spans residues 673–695 (FSPFMVLIIAILNDGTIMTISKD). Residues 696–711 (RVKPSPIPDSWKLKEI) lie on the Cytoplasmic side of the membrane. The helical transmembrane segment at 712-732 (FATGVVLGTYMALVTVVFFWL) threads the bilayer. The Extracellular portion of the chain corresponds to 733-753 (AHDTTFFSDKFGVRSLQGKDE). Residues 754-774 (ELIAVLYLQVSIISQALIFVT) form a helical membrane-spanning segment. The Cytoplasmic portion of the chain corresponds to 775–786 (RSRSWSFVERPG). Residues 787 to 807 (LLLLIAFFVAQLIATLIATYA) form a helical membrane-spanning segment. Topologically, residues 808–815 (HWEFARIK) are extracellular. The helical transmembrane segment at 816–836 (GCGWGWCGVIWIYSIVTYIPL) threads the bilayer. At 837–949 (DILKFITRYT…IDNLNQHYTV (113 aa)) the chain is on the cytoplasmic side. Threonine 883 carries the phosphothreonine modification. The residue at position 931 (serine 931) is a Phosphoserine. An interaction with 14-3-3 proteins region spans residues 947 to 949 (YTV). The residue at position 948 (threonine 948) is a Phosphothreonine.

Belongs to the cation transport ATPase (P-type) (TC 3.A.3) family. Type IIIA subfamily. In terms of assembly, binds to 14-3-3 proteins. The binding is induced by phosphorylation of Thr-948. Binding to 14-3-3 proteins activates the H(+)-ATPase. As to expression, expressed in guard cells.

Its subcellular location is the membrane. The enzyme catalyses ATP + H2O + H(+)(in) = ADP + phosphate + 2 H(+)(out). Functionally, the plasma membrane H(+) ATPase of plants and fungi generates a proton gradient that drives the active transport of nutrients by H(+)-symport. The resulting external acidification and/or internal alkinization may mediate growth responses. The chain is ATPase 6, plasma membrane-type (AHA6) from Arabidopsis thaliana (Mouse-ear cress).